The sequence spans 690 residues: Tripartite terminase subunit 3 (690 aa).

Positions 226 to 233 match the Walker A motif motif; sequence IPRRHGKT. The Walker B motif signature appears at 321-326; sequence LLFVDE. The active-site For ATPase activity is Glu326. Residues Asp481, Glu555, and Asp667 each act as for nuclease activity in the active site.

Belongs to the herpesviridae TRM3 protein family. Interacts with the terminase subunits TRM1 and TRM2. Interacts with portal protein.

Its subcellular location is the host nucleus. Its function is as follows. Component of the molecular motor that translocates viral genomic DNA in empty capsid during DNA packaging. Forms a tripartite terminase complex together with TRM1 and TRM2 in the host cytoplasm. Once the complex reaches the host nucleus, it interacts with the capsid portal vertex. This portal forms a ring in which genomic DNA is translocated into the capsid. TRM3 carries an RNase H-like nuclease activity that plays an important role for the cleavage of concatemeric viral DNA into unit length genomes. This chain is Tripartite terminase subunit 3, found in Homo sapiens (Human).